A 712-amino-acid chain; its full sequence is Interleukin-1 receptor-associated kinase 1 (712 aa).

Positions 27 to 106 (MCRFYKVMDA…DIITAWHPPA (80 aa)) constitute a Death domain. Threonine 66 bears the Phosphothreonine; by PKC/PRKCI mark. Positions 105–187 (PAPLPSPGTT…STKPGPESSV (83 aa)) are disordered. Residues 110–211 (SPGTTAPRPS…LCEISRGTHN (102 aa)) form a proST region region. The segment covering 115–133 (APRPSSIPAPAEAEAWSPR) has biased composition (low complexity). A Phosphoserine modification is found at serine 131. Residue lysine 134 forms a Glycyl lysine isopeptide (Lys-Gly) (interchain with G-Cter in ubiquitin) linkage. Over residues 137–154 (SSASTFLSPAFPGSQTHS) the composition is skewed to polar residues. A Glycyl lysine isopeptide (Lys-Gly) (interchain with G-Cter in ubiquitin) cross-link involves residue lysine 180. Phosphothreonine; by IRAK4 is present on threonine 209. The 310-residue stretch at 212–521 (FSEELKIGEG…TQVYERLEKL (310 aa)) folds into the Protein kinase domain. Residues 218–226 (IGEGGFGCV) and lysine 239 each bind ATP. The Proton acceptor role is filled by aspartate 340. ATP-binding positions include 342 to 345 (KSSN) and aspartate 358. Phosphoserine is present on residues serine 371 and serine 375. Threonine 387 carries the phosphothreonine modification. 3 disordered regions span residues 532–591 (SEAA…SDES), 613–660 (APLR…PPQI), and 690–712 (SSLP…EFQS). Polar residues predominate over residues 543–553 (QENSYVSSTGR). Serine 556 carries the phosphoserine modification. Composition is skewed to low complexity over residues 562-575 (QPLA…AQAA) and 643-658 (EGLA…SEPP).

The protein belongs to the protein kinase superfamily. TKL Ser/Thr protein kinase family. Pelle subfamily. Homodimer. Forms a complex with TRAF6, PELI1, IRAK4 and MYD88. Direct binding of SMAD6 to PELI1 prevents complex formation and hence negatively regulates IL1R-TLR signaling and eventually NF-kappa-B-mediated gene expression. The TRAF6-PELI1-IRAK4-MYD88 complex recruits MAP3K7/TAK1, TAB1 and TAB2 to mediate NF-kappa-B activation. Interaction with MYD88 recruits IRAK1 to the stimulated receptor complex. Interacts with TOLLIP; this interaction occurs in the cytosol prior to receptor activation. Interacts with IL1RL1. Interacts with PELI1 and TRAF6. Interacts (when polyubiquitinated) with IKBKG/NEMO. Interacts with RSAD2/viperin. Interacts with IRAK1BP1. Interacts with PELI2. Interacts with ZC3H12A; this interaction increases the interaction between ZC3H12A and IKBKB/IKKB. Interacts with IRAK4. Interacts with PELI3. Interacts with INAVA; the interaction takes place upon PRR stimulation. Interacts (via C-terminus) with NFATC4 (via N-terminus). In terms of assembly, (Microbial infection) Interacts with mumps virus protein SH; this interaction inhibits downstream NF-kappa-B pathway activation. As to quaternary structure, (Microbial infection) Interacts with alphaviruses SINV, CHIKV, RRV, VEEV and EEEV capsid proteins; the interactions lead to inhibition of IRAK1-dependent signaling. Mg(2+) serves as cofactor. In terms of processing, following recruitment on the activated receptor complex, phosphorylated on Thr-209, probably by IRAK4, resulting in a conformational change of the kinase domain, allowing further phosphorylations to take place. Thr-387 phosphorylation in the activation loop is required to achieve full enzymatic activity. Post-translationally, polyubiquitinated by TRAF6 after cell stimulation with IL-1-beta by PELI1, PELI2 and PELI3. Polyubiquitination occurs with polyubiquitin chains linked through 'Lys-63'. Ubiquitination promotes interaction with NEMO/IKBKG. Also sumoylated; leading to nuclear translocation. Isoform 1 and isoform 2 are ubiquitously expressed in all tissues examined, with isoform 1 being more strongly expressed than isoform 2.

The protein resides in the cytoplasm. The protein localises to the nucleus. It localises to the lipid droplet. It catalyses the reaction L-seryl-[protein] + ATP = O-phospho-L-seryl-[protein] + ADP + H(+). The catalysed reaction is L-threonyl-[protein] + ATP = O-phospho-L-threonyl-[protein] + ADP + H(+). Functionally, serine/threonine-protein kinase that plays a critical role in initiating innate immune response against foreign pathogens. Involved in Toll-like receptor (TLR) and IL-1R signaling pathways. Is rapidly recruited by MYD88 to the receptor-signaling complex upon TLR activation. Association with MYD88 leads to IRAK1 phosphorylation by IRAK4 and subsequent autophosphorylation and kinase activation. Phosphorylates E3 ubiquitin ligases Pellino proteins (PELI1, PELI2 and PELI3) to promote pellino-mediated polyubiquitination of IRAK1. Then, the ubiquitin-binding domain of IKBKG/NEMO binds to polyubiquitinated IRAK1 bringing together the IRAK1-MAP3K7/TAK1-TRAF6 complex and the NEMO-IKKA-IKKB complex. In turn, MAP3K7/TAK1 activates IKKs (CHUK/IKKA and IKBKB/IKKB) leading to NF-kappa-B nuclear translocation and activation. Alternatively, phosphorylates TIRAP to promote its ubiquitination and subsequent degradation. Phosphorylates the interferon regulatory factor 7 (IRF7) to induce its activation and translocation to the nucleus, resulting in transcriptional activation of type I IFN genes, which drive the cell in an antiviral state. When sumoylated, translocates to the nucleus and phosphorylates STAT3. The protein is Interleukin-1 receptor-associated kinase 1 of Homo sapiens (Human).